We begin with the raw amino-acid sequence, 276 residues long: Putative pyruvate, phosphate dikinase regulatory protein (276 aa).

154 to 161 (GVSRTSKS) lines the ADP pocket.

It belongs to the pyruvate, phosphate/water dikinase regulatory protein family. PDRP subfamily.

It carries out the reaction N(tele)-phospho-L-histidyl/L-threonyl-[pyruvate, phosphate dikinase] + ADP = N(tele)-phospho-L-histidyl/O-phospho-L-threonyl-[pyruvate, phosphate dikinase] + AMP + H(+). It catalyses the reaction N(tele)-phospho-L-histidyl/O-phospho-L-threonyl-[pyruvate, phosphate dikinase] + phosphate + H(+) = N(tele)-phospho-L-histidyl/L-threonyl-[pyruvate, phosphate dikinase] + diphosphate. Bifunctional serine/threonine kinase and phosphorylase involved in the regulation of the pyruvate, phosphate dikinase (PPDK) by catalyzing its phosphorylation/dephosphorylation. The chain is Putative pyruvate, phosphate dikinase regulatory protein from Wolbachia pipientis wMel.